We begin with the raw amino-acid sequence, 246 residues long: 4-hydroxy-tetrahydrodipicolinate reductase (246 aa).

Residues 7–12, 84–86, and 108–111 each bind NAD(+); these read GATGRT, GTT, and ASNF. The Proton donor/acceptor role is filled by H140. H141 contributes to the (S)-2,3,4,5-tetrahydrodipicolinate binding site. The Proton donor role is filled by K144. 150 to 151 lines the (S)-2,3,4,5-tetrahydrodipicolinate pocket; sequence GT.

This sequence belongs to the DapB family.

It localises to the cytoplasm. It catalyses the reaction (S)-2,3,4,5-tetrahydrodipicolinate + NAD(+) + H2O = (2S,4S)-4-hydroxy-2,3,4,5-tetrahydrodipicolinate + NADH + H(+). It carries out the reaction (S)-2,3,4,5-tetrahydrodipicolinate + NADP(+) + H2O = (2S,4S)-4-hydroxy-2,3,4,5-tetrahydrodipicolinate + NADPH + H(+). It functions in the pathway amino-acid biosynthesis; L-lysine biosynthesis via DAP pathway; (S)-tetrahydrodipicolinate from L-aspartate: step 4/4. In terms of biological role, catalyzes the conversion of 4-hydroxy-tetrahydrodipicolinate (HTPA) to tetrahydrodipicolinate. The protein is 4-hydroxy-tetrahydrodipicolinate reductase of Natronomonas pharaonis (strain ATCC 35678 / DSM 2160 / CIP 103997 / JCM 8858 / NBRC 14720 / NCIMB 2260 / Gabara) (Halobacterium pharaonis).